The primary structure comprises 367 residues: Molybdopterin synthase catalytic subunit (367 aa).

Substrate-binding positions include 101–102 (HR), K117, and 124–126 (KKE). The tract at residues 325–350 (RHFTKREPSSMEAAPPKKSRKKSYSA) is disordered.

The protein belongs to the MoaE family. MOCS2B subfamily. As to quaternary structure, heterotetramer; composed of 2 small (Mocs2A) and 2 large (Mocs2B) subunits. Component of the Ada2a-containing (ATAC) complex composed of at least Ada2a, Atac1, Hcf, Ada3, Gcn5, Mocs2B, Charac-14, Atac3, Atac2, NC2beta and wds.

It localises to the cytoplasm. Its subcellular location is the nucleus. It carries out the reaction 2 [molybdopterin-synthase sulfur-carrier protein]-C-terminal-Gly-aminoethanethioate + cyclic pyranopterin phosphate + H2O = molybdopterin + 2 [molybdopterin-synthase sulfur-carrier protein]-C-terminal Gly-Gly + 2 H(+). The protein operates within cofactor biosynthesis; molybdopterin biosynthesis. Catalytic subunit of the molybdopterin synthase complex, a complex that catalyzes the conversion of precursor Z into molybdopterin. Acts by mediating the incorporation of 2 sulfur atoms from thiocarboxylated Mocs2A into precursor Z to generate a dithiolene group. Involved during biosynthesis of the molybdenum cofactor. The protein is Molybdopterin synthase catalytic subunit of Drosophila melanogaster (Fruit fly).